Reading from the N-terminus, the 415-residue chain is Phosphoglycerate kinase (415 aa).

Positions 22, 23, 24, 25, 37, 38, 61, 62, 64, 120, 121, 168, and 169 each coordinate (2R)-3-phosphoglycerate. Glycine 212 is an ADP binding site. Glycine 212 provides a ligand contact to CDP. Residues alanine 213 and lysine 214 each contribute to the AMP site. An ATP-binding site is contributed by alanine 213. Alanine 213 is a Mg(2+) binding site. Residue aspartate 217 participates in CDP binding. Aspartate 217 contacts Mg(2+). Residue lysine 218 coordinates AMP. Residue lysine 218 coordinates ATP. Glycine 236 is an ADP binding site. Glycine 236 lines the CDP pocket. 2 residues coordinate AMP: glycine 237 and glycine 311. Positions 237 and 311 each coordinate ATP. The CDP site is built by glycine 336 and phenylalanine 341. Residue phenylalanine 341 participates in ADP binding. Residue glutamate 342 participates in AMP binding. ATP is bound by residues glutamate 342, aspartate 373, and threonine 374. Residue aspartate 373 participates in Mg(2+) binding.

The protein belongs to the phosphoglycerate kinase family. In terms of assembly, monomer. It depends on Mg(2+) as a cofactor.

It localises to the cytoplasm. It catalyses the reaction (2R)-3-phosphoglycerate + ATP = (2R)-3-phospho-glyceroyl phosphate + ADP. It participates in carbohydrate degradation; glycolysis; pyruvate from D-glyceraldehyde 3-phosphate: step 2/5. This Opisthorchis sinensis (Clonorchis sinensis) protein is Phosphoglycerate kinase (PGK).